The primary structure comprises 145 residues: uncharacterized protein (145 aa).

This is an uncharacterized protein from Rickettsia prowazekii (strain Madrid E).